Reading from the N-terminus, the 202-residue chain is LexA repressor (202 aa).

Positions 28–48 (RAEIAQRLGFRSPNAAEEHLK) form a DNA-binding region, H-T-H motif. Residues Ser119 and Lys156 each act as for autocatalytic cleavage activity in the active site.

Belongs to the peptidase S24 family. As to quaternary structure, homodimer.

The catalysed reaction is Hydrolysis of Ala-|-Gly bond in repressor LexA.. Its function is as follows. Represses a number of genes involved in the response to DNA damage (SOS response), including recA and lexA. Binds to the 16 bp palindromic sequence 5'-CTGTATATATATACAG-3'. In the presence of single-stranded DNA, RecA interacts with LexA causing an autocatalytic cleavage which disrupts the DNA-binding part of LexA, leading to derepression of the SOS regulon and eventually DNA repair. In Enterobacter sp. (strain 638), this protein is LexA repressor.